Here is a 116-residue protein sequence, read N- to C-terminus: Phosphoribosyl-AMP cyclohydrolase (116 aa).

Aspartate 82 lines the Mg(2+) pocket. Zn(2+) is bound at residue cysteine 83. Positions 84 and 86 each coordinate Mg(2+). Residues cysteine 99 and cysteine 106 each coordinate Zn(2+).

This sequence belongs to the PRA-CH family. As to quaternary structure, homodimer. Mg(2+) is required as a cofactor. Zn(2+) serves as cofactor.

It localises to the cytoplasm. The enzyme catalyses 1-(5-phospho-beta-D-ribosyl)-5'-AMP + H2O = 1-(5-phospho-beta-D-ribosyl)-5-[(5-phospho-beta-D-ribosylamino)methylideneamino]imidazole-4-carboxamide. The protein operates within amino-acid biosynthesis; L-histidine biosynthesis; L-histidine from 5-phospho-alpha-D-ribose 1-diphosphate: step 3/9. Catalyzes the hydrolysis of the adenine ring of phosphoribosyl-AMP. In Saccharopolyspora erythraea (strain ATCC 11635 / DSM 40517 / JCM 4748 / NBRC 13426 / NCIMB 8594 / NRRL 2338), this protein is Phosphoribosyl-AMP cyclohydrolase.